The primary structure comprises 1203 residues: MAGHLVKYGKHRTRRSYSRIKEVLDLPNLIEIQTNSYNWFLDEGLRDMFDDIMPIEDFQGNLSLEFVDYQLLEPKYSVDEAREHDANYSAPLHVTLRLTNHETGEIKSQDVFFGDFPLMTAQGTFIINGAERVIVSQLVRSPGVYFNEDTDKNGRTVYGATVIPNRGAWLEFETDAKNVSYVRIDRTRKIPMTELVRALGFGSDDEILDILGDNESLMQTLEKDIHKNTDDSRVEESLKDIYERLRPGEPKTADSSRSLLTARFFDPKRYDMAPVGRYKTNKKLSLKTRLLGLTLAETLADPDTGEIIAAKGTVVDKDVMKSLAPFLDQDDFKMVTFQPSDEAVVTEPLKLQIIKVQSPDDPEQEVPVIGNGNIDIKLKHIRPADIIASMNYFFDLQLGIGNTDDIDHLGNRRIRSVGELLQNQFRIGLSRMERVVRERMSIQDAATVTPQQLINIRPVVASIKEFFGSSQLSQFMDQTNPLGELTHKRRLSALGPGGLTRDRAGYEVRDVHYTHYGRMCPIETPEGPNIGLINSLSSYARVNKYGFIETPYRRVSWDTHKVTDKIDYLTADEEDNYVVAQANTPLNDDGSFNTDTIMARAQSENIETSADRIDYMDVSPKQVVAVATACIPFLENDDSNRALMGANMQRQAVPLLNPHAPLIGTGIEYKAAHDSGVALISQHDGTVEYVDAREIRVRREDGALDTYKLMKFRRSNGGKNYNQRPIVKVGDHVDNDEVLADGPSMENGELALGQNPLVAFMTWQGYNFEDAIGINERLVRDDVYTSIHIEEYESEARDTKLGPEEMTREIPNVGEDALKNLDEDGIIRVGAEVQDGDILVGKVTPKGVTELSAEERLLHAIFGEKAREVRDTSLKVPHGGGGIIQDVKIFTRENGDELSPGVNMMVRVYIAQKRKIQVGDKMSGRHGNKGTVSVVIPEEDMPYMPDGTPIDIMLSPMGVPSRMNIGQVLELHLGMAARKLGVHMATPVFDGAQDTDIADAVKEAGMAADAKTVLYDGRTGEPFDKRVAVGVMHYLKLAHMVDDKMHARSIGPYSLVTQQPLGGKAQFGGQRFGEMEVWALEAYGAAYTLQEILTYKSDDVVGRVKTYEAIVKGDPIPKPGVPESFRVLVKELQSLGLDMKVLNGDKEEIELRDMDDEDDDVVNVDALSKYAQQQEEQRKAAAQTDESKTAPATKNESQPNTQD.

Positions 1167–1203 are disordered; that stretch reads LSKYAQQQEEQRKAAAQTDESKTAPATKNESQPNTQD. Polar residues predominate over residues 1190-1203; sequence APATKNESQPNTQD.

Belongs to the RNA polymerase beta chain family. As to quaternary structure, the RNAP catalytic core consists of 2 alpha, 1 beta, 1 beta' and 1 omega subunit. When a sigma factor is associated with the core the holoenzyme is formed, which can initiate transcription.

The catalysed reaction is RNA(n) + a ribonucleoside 5'-triphosphate = RNA(n+1) + diphosphate. In terms of biological role, DNA-dependent RNA polymerase catalyzes the transcription of DNA into RNA using the four ribonucleoside triphosphates as substrates. This is DNA-directed RNA polymerase subunit beta from Levilactobacillus brevis (strain ATCC 367 / BCRC 12310 / CIP 105137 / JCM 1170 / LMG 11437 / NCIMB 947 / NCTC 947) (Lactobacillus brevis).